The following is a 598-amino-acid chain: Probable transporter mch1 (598 aa).

The tract at residues 1 to 49 is disordered; sequence MASPTPAPRPDQISASTPLLQSDSTSSCASSIRSLSPSRRRHRNGRTSP. The segment covering 22-37 has biased composition (low complexity); it reads SDSTSSCASSIRSLSP. N-linked (GlcNAc...) asparagine glycosylation occurs at Asn57. 6 helical membrane-spanning segments follow: residues 63–83, 96–116, 122–142, 164–184, 202–222, and 241–261; these read ALLSSLCAGSITIFSMYGHIF, GLSSAASFATYMPVPLLGYMC, GPLSFVSALFFAAGYGLAAGV, LAYAAMITAFVFIGVGTCSMY, GLALAVPIAAFGLSGMWQSQL, and VFHFFIFLGVLLFVVGCLGTF. The tract at residues 315–334 is disordered; that stretch reads AGILDPSKPDNDSDSEEEDD. N-linked (GlcNAc...) asparagine glycosylation occurs at Asn325. Transmembrane regions (helical) follow at residues 355-375, 405-425, 453-473, 486-506, 516-536, and 565-585; these read HTMWCFALGFFLMIGPGEAFI, IVGITSTLVRLLTGSLTDLLA, FLLFFAVTLSVGLATLASGWI, LVGAGYGAVFSLTPIIITVIW, GIVAMFPALGATFWGLVYSAV, and SAFWAMAASVWVACGLVLWAW.

This sequence belongs to the major facilitator superfamily.

It is found in the vacuole membrane. Its function is as follows. Probable transporter. The polypeptide is Probable transporter mch1 (mch1) (Neurospora crassa (strain ATCC 24698 / 74-OR23-1A / CBS 708.71 / DSM 1257 / FGSC 987)).